The following is a 252-amino-acid chain: Phosphate import ATP-binding protein PstB (252 aa).

The ABC transporter domain maps to 6-247 (IDTRDVNFWY…PEKEATQNYI (242 aa)). 38–45 (GPSGCGKS) is an ATP binding site.

It belongs to the ABC transporter superfamily. Phosphate importer (TC 3.A.1.7) family. The complex is composed of two ATP-binding proteins (PstB), two transmembrane proteins (PstC and PstA) and a solute-binding protein (PstS).

The protein localises to the cell inner membrane. It carries out the reaction phosphate(out) + ATP + H2O = ADP + 2 phosphate(in) + H(+). Its function is as follows. Part of the ABC transporter complex PstSACB involved in phosphate import. Responsible for energy coupling to the transport system. The polypeptide is Phosphate import ATP-binding protein PstB (Bacteroides thetaiotaomicron (strain ATCC 29148 / DSM 2079 / JCM 5827 / CCUG 10774 / NCTC 10582 / VPI-5482 / E50)).